The following is a 118-amino-acid chain: Large ribosomal subunit protein bL19 (118 aa).

The protein belongs to the bacterial ribosomal protein bL19 family.

This protein is located at the 30S-50S ribosomal subunit interface and may play a role in the structure and function of the aminoacyl-tRNA binding site. The sequence is that of Large ribosomal subunit protein bL19 from Ligilactobacillus salivarius (strain UCC118) (Lactobacillus salivarius).